A 374-amino-acid polypeptide reads, in one-letter code: Putative glutamate--cysteine ligase 2 (374 aa).

Belongs to the glutamate--cysteine ligase type 2 family. YbdK subfamily.

It catalyses the reaction L-cysteine + L-glutamate + ATP = gamma-L-glutamyl-L-cysteine + ADP + phosphate + H(+). Its function is as follows. ATP-dependent carboxylate-amine ligase which exhibits weak glutamate--cysteine ligase activity. The protein is Putative glutamate--cysteine ligase 2 of Acidovorax ebreus (strain TPSY) (Diaphorobacter sp. (strain TPSY)).